A 229-amino-acid chain; its full sequence is Growth factor receptor-bound protein 2-A (229 aa).

The 58-residue stretch at 1–58 (MEAIAKYDFKATADDELSFKRGDVLKVLNEECDQNWYKAELNGKDGFIPKNYIEMKAH) folds into the SH3 1 domain. The SH2 domain maps to 60–152 (WFFGKIPRAK…NQQIFLRDIE (93 aa)). One can recognise an SH3 2 domain in the interval 168–227 (QQPTYVQALFDFDPQEDGELGFRRGDFIQVVDNSDPNWWKGTCLSQTGMFPRNYVTPVNR).

This sequence belongs to the GRB2/sem-5/DRK family.

The protein localises to the nucleus. Its subcellular location is the cytoplasm. It is found in the endosome. It localises to the golgi apparatus. Its function is as follows. Adapter protein that provides a critical link between cell surface growth factor receptors and the Ras signaling pathway. Promotes meiotic reinitiation during oocyte maturation. In Xenopus laevis (African clawed frog), this protein is Growth factor receptor-bound protein 2-A (grb2-a).